The sequence spans 180 residues: Crossover junction endodeoxyribonuclease RuvC (180 aa).

Active-site residues include Asp-7, Glu-66, and Asp-138. 3 residues coordinate Mg(2+): Asp-7, Glu-66, and Asp-138.

Belongs to the RuvC family. Homodimer which binds Holliday junction (HJ) DNA. The HJ becomes 2-fold symmetrical on binding to RuvC with unstacked arms; it has a different conformation from HJ DNA in complex with RuvA. In the full resolvosome a probable DNA-RuvA(4)-RuvB(12)-RuvC(2) complex forms which resolves the HJ. Mg(2+) is required as a cofactor.

Its subcellular location is the cytoplasm. It catalyses the reaction Endonucleolytic cleavage at a junction such as a reciprocal single-stranded crossover between two homologous DNA duplexes (Holliday junction).. Its function is as follows. The RuvA-RuvB-RuvC complex processes Holliday junction (HJ) DNA during genetic recombination and DNA repair. Endonuclease that resolves HJ intermediates. Cleaves cruciform DNA by making single-stranded nicks across the HJ at symmetrical positions within the homologous arms, yielding a 5'-phosphate and a 3'-hydroxyl group; requires a central core of homology in the junction. The consensus cleavage sequence is 5'-(A/T)TT(C/G)-3'. Cleavage occurs on the 3'-side of the TT dinucleotide at the point of strand exchange. HJ branch migration catalyzed by RuvA-RuvB allows RuvC to scan DNA until it finds its consensus sequence, where it cleaves and resolves the cruciform DNA. This is Crossover junction endodeoxyribonuclease RuvC from Burkholderia lata (strain ATCC 17760 / DSM 23089 / LMG 22485 / NCIMB 9086 / R18194 / 383).